Here is a 461-residue protein sequence, read N- to C-terminus: Putative aldehyde dehydrogenase FUS7 (461 aa).

Residue 220 to 225 coordinates NAD(+); that stretch reads GSTTTG. Residues E242 and C276 contribute to the active site.

The protein belongs to the aldehyde dehydrogenase family.

The enzyme catalyses an aldehyde + NAD(+) + H2O = a carboxylate + NADH + 2 H(+). Putative aldehyde dehydrogenase; part of the gene cluster that mediates the biosynthesis of the mycotoxin fusarin C. Within the cluster, FUS1, FUS2, FUS8 and FUS9 are sufficient for fusarin production. The other FUS cluster members are not essential for fusarin C biosynthesis. The chain is Putative aldehyde dehydrogenase FUS7 from Gibberella fujikuroi (strain CBS 195.34 / IMI 58289 / NRRL A-6831) (Bakanae and foot rot disease fungus).